Reading from the N-terminus, the 31-residue chain is Conotoxin (31 aa).

Belongs to the conotoxin S superfamily. In terms of processing, contains 5 disulfide bonds. Expressed by the venom duct.

The protein localises to the secreted. The polypeptide is Conotoxin (Conus striatus (Striated cone)).